Reading from the N-terminus, the 276-residue chain is Kallikrein-11 (276 aa).

A signal peptide spans M1–G44. Positions E45–R47 are cleaved as a propeptide — activation peptide. A Peptidase S1 domain is found at I48 to R274. Disulfide bonds link C54-C189, C73-C89, C168-C235, C200-C214, and C225-C250. The active-site Charge relay system is H88. N125 carries an N-linked (GlcNAc...) asparagine glycan. The Charge relay system role is filled by D136. N191 and N207 each carry an N-linked (GlcNAc...) asparagine glycan. S229 acts as the Charge relay system in catalysis. Residue N236 is glycosylated (N-linked (GlcNAc...) asparagine).

The protein belongs to the peptidase S1 family. Kallikrein subfamily. In terms of tissue distribution, expressed in brain and prostate (isoform 1) and prostate (isoform 2).

It localises to the secreted. Its function is as follows. Possible multifunctional protease. Efficiently cleaves 'bz-Phe-Arg-4-methylcoumaryl-7-amide', a kallikrein substrate, and weakly cleaves other substrates for kallikrein and trypsin. In Mus musculus (Mouse), this protein is Kallikrein-11 (Klk11).